We begin with the raw amino-acid sequence, 238 residues long: MGQKVNPIGMRLQVNRTWDSRWFAESKDYGNLLLEDLKMREFIHDYAKQAGVSKVIIERPHRKCRVTIHTARPGVIIGKKGADIETLRKKLAAFTKSELHLNIVEIRKPELDAQLVAESIAQQMERRVSFRRAMKRGVQNAMRIGALGIRVNVAGRLGGAEIARTEWYREGRVPLHTLRADIDYATSEASTPYGIIGVKVWIFKGEILEHDPQAHDRRHSEAQEGAAPRPPRRDRERA.

Residues 39–107 (MREFIHDYAK…ELHLNIVEIR (69 aa)) enclose the KH type-2 domain. The segment covering 212 to 222 (PQAHDRRHSEA) has biased composition (basic and acidic residues). A disordered region spans residues 212–238 (PQAHDRRHSEAQEGAAPRPPRRDRERA).

The protein belongs to the universal ribosomal protein uS3 family. In terms of assembly, part of the 30S ribosomal subunit. Forms a tight complex with proteins S10 and S14.

Binds the lower part of the 30S subunit head. Binds mRNA in the 70S ribosome, positioning it for translation. The protein is Small ribosomal subunit protein uS3 of Cereibacter sphaeroides (strain ATCC 17025 / ATH 2.4.3) (Rhodobacter sphaeroides).